The chain runs to 156 residues: RNA polymerase sigma factor SigS (156 aa).

The Polymerase core binding motif lies at 29–44 (EYYQLLLIKMWQLSQI). The segment at residues 126–145 (QFEIAEIMSLSLSTIKLIKT) is a DNA-binding region (H-T-H motif).

It belongs to the sigma-70 factor family.

Functionally, sigma factors are initiation factors that promote the attachment of RNA polymerase to specific initiation sites and are then released. Sigma-S contributes to the protection against external stress, thus playing a role in cellular fitness and survival. In Staphylococcus aureus (strain bovine RF122 / ET3-1), this protein is RNA polymerase sigma factor SigS (sigS).